A 72-amino-acid polypeptide reads, in one-letter code: UPF0154 protein LBA1278 (72 aa).

Residues 3–23 (LGLAIFLIIIALLVGATAGFY) traverse the membrane as a helical segment.

This sequence belongs to the UPF0154 family.

The protein localises to the cell membrane. This is UPF0154 protein LBA1278 from Lactobacillus acidophilus (strain ATCC 700396 / NCK56 / N2 / NCFM).